The chain runs to 292 residues: MYEVIQKRKTKIINVLQSPELMRLIEDPSNLGISLHFPVSSLLKSNKCTPMPKLSTYSLASGGFKDWCADIPLDVPPEIDIIDFYWDVILCMESQFILDYNVPSKNKGNNQKSVAKLLKNKLVNDMKTTLKRLIYNENTKQYKNNNSHDGYNWRKLGSQYFILYLPLFTQELIWCKLNENYFHVVLPSLLNSRNVHDNHSTYINKDWLLALLELTSNLNQNFKFEYMKLRLYILRDDLINNGLDLLKNLNWVGGKLIKNEDREVLLNSTDLATDSISHLLGDENFVILEFEC.

This sequence belongs to the ODC antizyme family. Interacts with ODC/SPE1 and thereby sterically blocks ODC homodimerization.

Its function is as follows. Ornithine decarboxylase (ODC) antizyme protein that negatively regulates ODC activity and intracellular polyamine biosynthesis in response to increased intracellular polyamine levels. Binds to ODC/SPE1 monomers, inhibiting the assembly of the functional ODC homodimer, and targets the monomers for ubiquitin-independent proteolytic destruction by the 26S proteasome. In Saccharomyces cerevisiae (strain ATCC 204508 / S288c) (Baker's yeast), this protein is Ornithine decarboxylase antizyme (OAZ1).